The following is a 222-amino-acid chain: Probable transaldolase 2 (222 aa).

The active-site Schiff-base intermediate with substrate is K90.

The protein belongs to the transaldolase family. Type 3B subfamily.

The protein resides in the cytoplasm. It carries out the reaction D-sedoheptulose 7-phosphate + D-glyceraldehyde 3-phosphate = D-erythrose 4-phosphate + beta-D-fructose 6-phosphate. It participates in carbohydrate degradation; pentose phosphate pathway; D-glyceraldehyde 3-phosphate and beta-D-fructose 6-phosphate from D-ribose 5-phosphate and D-xylulose 5-phosphate (non-oxidative stage): step 2/3. Functionally, transaldolase is important for the balance of metabolites in the pentose-phosphate pathway. The polypeptide is Probable transaldolase 2 (Bacillus cereus (strain ATCC 14579 / DSM 31 / CCUG 7414 / JCM 2152 / NBRC 15305 / NCIMB 9373 / NCTC 2599 / NRRL B-3711)).